Reading from the N-terminus, the 474-residue chain is tRNA-2-methylthio-N(6)-dimethylallyladenosine synthase (474 aa).

The region spanning 3–120 is the MTTase N-terminal domain; the sequence is KKLHIKTWGC…LPDMIEQVRR (118 aa). [4Fe-4S] cluster contacts are provided by Cys-12, Cys-49, Cys-83, Cys-157, Cys-161, and Cys-164. The region spanning 143 to 375 is the Radical SAM core domain; the sequence is RAEGPTAFVS…QDRITQQAMR (233 aa). In terms of domain architecture, TRAM spans 378–441; that stretch reads RHMMGTVQRI…TNSLRGKFIR (64 aa).

It belongs to the methylthiotransferase family. MiaB subfamily. In terms of assembly, monomer. [4Fe-4S] cluster serves as cofactor.

The protein localises to the cytoplasm. It catalyses the reaction N(6)-dimethylallyladenosine(37) in tRNA + (sulfur carrier)-SH + AH2 + 2 S-adenosyl-L-methionine = 2-methylsulfanyl-N(6)-dimethylallyladenosine(37) in tRNA + (sulfur carrier)-H + 5'-deoxyadenosine + L-methionine + A + S-adenosyl-L-homocysteine + 2 H(+). Catalyzes the methylthiolation of N6-(dimethylallyl)adenosine (i(6)A), leading to the formation of 2-methylthio-N6-(dimethylallyl)adenosine (ms(2)i(6)A) at position 37 in tRNAs that read codons beginning with uridine. The sequence is that of tRNA-2-methylthio-N(6)-dimethylallyladenosine synthase from Shewanella putrefaciens (strain CN-32 / ATCC BAA-453).